The primary structure comprises 167 residues: MSSARTVRKDKPRGRHHGLTQQKRQEIKEAFELFDTDGSGTIDAKELNVAMRALGFEMTEEQINQMIADVDKDGSGAIDFDEFCHMMTAKIGERDTKEELMKAFRIIDQDNNGKISPEDIQRIAKELGENFTVKDIQDMIEEADRDRDGEVNVEEFLRMMKRTSYAY.

Residues 1–18 (MSSARTVRKDKPRGRHHG) are compositionally biased toward basic residues. Positions 1 to 23 (MSSARTVRKDKPRGRHHGLTQQK) are disordered. EF-hand domains are found at residues 22 to 57 (QKRQ…LGFE), 58 to 93 (MTEE…KIGE), 95 to 130 (DTKE…LGEN), and 131 to 166 (FTVK…TSYA). Ca(2+) is bound by residues Asp35, Asp37, Ser39, Thr41, Glu46, Asp71, Asp73, Ser75, Glu82, Asp108, Asp110, Asn112, Lys114, Asp119, Asp144, Asp146, Asp148, Glu150, and Glu155.

Belongs to the centrin family.

Its subcellular location is the cytoplasm. The protein localises to the cytoskeleton. It is found in the microtubule organizing center. Its function is as follows. Plays a fundamental role in microtubule-organizing center structure and function. In Atriplex nummularia (Old man saltbush), this protein is Caltractin.